Here is a 521-residue protein sequence, read N- to C-terminus: Cytochrome P450 monooxygenase astF (521 aa).

Residues 14–34 (TMATFLLPVAIGTIILLFLYG) traverse the membrane as a helical segment. 4 N-linked (GlcNAc...) asparagine glycosylation sites follow: asparagine 198, asparagine 218, asparagine 268, and asparagine 281. Cysteine 430 contributes to the heme binding site.

It belongs to the cytochrome P450 family. Heme serves as cofactor.

Its subcellular location is the membrane. The protein operates within secondary metabolite biosynthesis; terpenoid biosynthesis. Functionally, cytochrome P450 monooxygenase; part of the gene cluster that mediates the biosynthesis of astellolides, drimane-type sesquiterpene esters that show antimicrobial, anti-inflammatory, and anti-tumor activities. The first step in astellolide biosynthesis is performed by the sesquiterpene cyclase astC that catalyzes the formation of drimanyl pyrophosphate from farnesyl pyrophosphate. Drimanyl pyrophosphate is then dephosphorylated by the sesquiterpene phosphatase astI to produce drimanyl monophosphate which is further dephosphorylated to drim-8-ene-11-ol by atsK. Drim-8-ene-11-ol is converted to confertifolin, probably by the cytochrome P450 monooxygenase astD and/or the dehydrogenase astE. The cytochrome P450 monooxygenases astB, astF and astJ then hydroxylate confertifolin at C6, C14, or C15 to form trihydroxy confertifolin. The nonribosomal peptide synthetase astA catalyzes ester bond formation between trihydroxy contifolin and benzoic acid (BA) or 4-hydroxy benzoic acid (4HBA), leading to the formation of dideacetyl astellolides A and B, respectively. Finally, the O-acetyltransferase astG converts dideacetyl astellolides A and B into deacetyl astellolides A and B. The protein is Cytochrome P450 monooxygenase astF of Aspergillus oryzae (strain ATCC 42149 / RIB 40) (Yellow koji mold).